A 255-amino-acid polypeptide reads, in one-letter code: Indole-3-glycerol phosphate synthase (255 aa).

The protein belongs to the TrpC family.

The catalysed reaction is 1-(2-carboxyphenylamino)-1-deoxy-D-ribulose 5-phosphate + H(+) = (1S,2R)-1-C-(indol-3-yl)glycerol 3-phosphate + CO2 + H2O. It functions in the pathway amino-acid biosynthesis; L-tryptophan biosynthesis; L-tryptophan from chorismate: step 4/5. This is Indole-3-glycerol phosphate synthase from Streptococcus thermophilus (strain ATCC BAA-250 / LMG 18311).